The chain runs to 234 residues: UPF0104 membrane protein MJ1078 (234 aa).

A run of 5 helical transmembrane segments spans residues 32–52 (VGTVFIERVFDLVAMISLLFI), 70–90 (IKWGVIIILFLIILIFGFLIV), 123–143 (LITLSFTGWFIEGLTVYFIFL), 164–184 (LTAIPLTPSGLGVVEYALIYI), and 198–218 (VLILYRLISYFSIVLFGAIMF).

It belongs to the UPF0104 family.

Its subcellular location is the cell membrane. The polypeptide is UPF0104 membrane protein MJ1078 (Methanocaldococcus jannaschii (strain ATCC 43067 / DSM 2661 / JAL-1 / JCM 10045 / NBRC 100440) (Methanococcus jannaschii)).